Consider the following 152-residue polypeptide: Xanthine-guanine phosphoribosyltransferase (152 aa).

5-phospho-alpha-D-ribose 1-diphosphate contacts are provided by residues 37-38 (RG), R69, and 88-96 (DDLVDTGGT). Residue R69 participates in GMP binding. A Mg(2+)-binding site is contributed by D89. Residues D92 and I135 each contribute to the guanine site. Xanthine is bound by residues D92 and I135. GMP-binding positions include 92-96 (DTGGT) and 134-135 (WI).

The protein belongs to the purine/pyrimidine phosphoribosyltransferase family. XGPT subfamily. Homotetramer. Mg(2+) serves as cofactor.

It is found in the cell inner membrane. It carries out the reaction GMP + diphosphate = guanine + 5-phospho-alpha-D-ribose 1-diphosphate. The catalysed reaction is XMP + diphosphate = xanthine + 5-phospho-alpha-D-ribose 1-diphosphate. It catalyses the reaction IMP + diphosphate = hypoxanthine + 5-phospho-alpha-D-ribose 1-diphosphate. Its pathway is purine metabolism; GMP biosynthesis via salvage pathway; GMP from guanine: step 1/1. It participates in purine metabolism; XMP biosynthesis via salvage pathway; XMP from xanthine: step 1/1. Purine salvage pathway enzyme that catalyzes the transfer of the ribosyl-5-phosphate group from 5-phospho-alpha-D-ribose 1-diphosphate (PRPP) to the N9 position of the 6-oxopurines guanine and xanthine to form the corresponding ribonucleotides GMP (guanosine 5'-monophosphate) and XMP (xanthosine 5'-monophosphate), with the release of PPi. To a lesser extent, also acts on hypoxanthine. The sequence is that of Xanthine-guanine phosphoribosyltransferase from Salmonella choleraesuis (strain SC-B67).